We begin with the raw amino-acid sequence, 101 residues long: Small ribosomal subunit protein uS14 (101 aa).

It belongs to the universal ribosomal protein uS14 family. In terms of assembly, part of the 30S ribosomal subunit. Contacts proteins S3 and S10.

Binds 16S rRNA, required for the assembly of 30S particles and may also be responsible for determining the conformation of the 16S rRNA at the A site. The chain is Small ribosomal subunit protein uS14 from Stutzerimonas stutzeri (strain A1501) (Pseudomonas stutzeri).